The sequence spans 472 residues: MELKTMYFDTNNTMYLKVVSKKFVDKLNEGYNYLDDEYKIATLDITDDLFYKCSDDCVRECFNNDSSAHLRMRKTANELVSFTDYKNVFGQLRKDSVFVLQVFPKFDDPEFQMQEITDGNHGTIYKANRFYLGEKFDLGDVEVVKFFIKKGTDIHLHYDSIQRWAFDNRKTEVSMYLFGFSFVRGLDNFKVLAKICRDGNLELLRLLELNGFNETIKLYAIILSYISFQPLLTNYLLTKSYNFQKSNITVSNWKATMPYGTIDQYKTKVLLMAIANNHAELVQYLLTQNPSDKDINHAMLYAVTTANASLLDYTLKNGGNIHYKNDQALILAVRFNHISMVRKLICLGMDSNNVFALTMAAENNHQDIVQHLINRGADVNANNRSALIAAVKNGHLKIVQMFVNNGADIKIDDTVIKTACKNGHNNIVKYLLGKGVSCDDIVLPSNSSFFSIVKLAVKRSIIVNNDKSNKIK.

ANK repeat units lie at residues 125–156, 187–216, 265–295, 297–323, 325–351, 352–381, 382–411, and 413–440; these read YKAN…DIHL, DNFK…NETI, YKTK…DKDI, HAML…NIHY, NDQA…GMDS, NNVF…DVNA, NNRS…DIKI, and DTVI…SCDD.

In Acanthamoeba polyphaga (Amoeba), this protein is Putative ankyrin repeat protein L675.